A 500-amino-acid polypeptide reads, in one-letter code: Probable malate:quinone oxidoreductase (500 aa).

The protein belongs to the MQO family. Requires FAD as cofactor.

The enzyme catalyses (S)-malate + a quinone = a quinol + oxaloacetate. Its pathway is carbohydrate metabolism; tricarboxylic acid cycle; oxaloacetate from (S)-malate (quinone route): step 1/1. In Bacillus cereus (strain AH187), this protein is Probable malate:quinone oxidoreductase.